A 352-amino-acid chain; its full sequence is Carbohydrate sulfotransferase 11 (352 aa).

Residues 1 to 16 (MKPALLEVMRMNRICR) lie on the Cytoplasmic side of the membrane. The chain crosses the membrane as a helical; Signal-anchor for type II membrane protein span at residues 17–37 (MVLATCLGSFILVIFYFQSML). At 38 to 352 (HPVMRRNPFG…YSVPNYLKLD (315 aa)) the chain is on the lumenal side. 3'-phosphoadenylyl sulfate-binding positions include 124-130 (PKVACTN) and 186-194 (REPFERLVS). 4 N-linked (GlcNAc...) asparagine glycosylation sites follow: N205, N223, N321, and N342.

The protein belongs to the sulfotransferase 2 family. Post-translationally, N-glycosylated; required for activity and stability.

The protein localises to the golgi apparatus membrane. The catalysed reaction is chondroitin beta-D-glucuronate + n 3'-phosphoadenylyl sulfate = chondroitin 4'-sulfate + n adenosine 3',5'-bisphosphate + n H(+). Functionally, catalyzes the transfer of sulfate to position 4 of the N-acetylgalactosamine (GalNAc) residue of chondroitin. Chondroitin sulfate constitutes the predominant proteoglycan present in cartilage and is distributed on the surfaces of many cells and extracellular matrices. Can also sulfate Gal residues in desulfated dermatan sulfate. Preferentially sulfates in GlcA-&gt;GalNAc unit than in IdoA-&gt;GalNAc unit. Does not form 4, 6-di-O-sulfated GalNAc when chondroitin sulfate C is used as an acceptor. This chain is Carbohydrate sulfotransferase 11 (Chst11), found in Rattus norvegicus (Rat).